A 428-amino-acid chain; its full sequence is Enolase 1 (428 aa).

Gln167 is a (2R)-2-phosphoglycerate binding site. Glu209 serves as the catalytic Proton donor. Positions 246, 288, and 315 each coordinate Mg(2+). Residues Lys340, Arg369, Ser370, and Lys391 each contribute to the (2R)-2-phosphoglycerate site. Lys340 serves as the catalytic Proton acceptor.

This sequence belongs to the enolase family. In terms of assembly, component of the RNA degradosome, a multiprotein complex involved in RNA processing and mRNA degradation. Requires Mg(2+) as cofactor.

Its subcellular location is the cytoplasm. The protein resides in the secreted. It is found in the cell surface. The catalysed reaction is (2R)-2-phosphoglycerate = phosphoenolpyruvate + H2O. The protein operates within carbohydrate degradation; glycolysis; pyruvate from D-glyceraldehyde 3-phosphate: step 4/5. Catalyzes the reversible conversion of 2-phosphoglycerate (2-PG) into phosphoenolpyruvate (PEP). It is essential for the degradation of carbohydrates via glycolysis. The protein is Enolase 1 of Pseudomonas syringae pv. tomato (strain ATCC BAA-871 / DC3000).